An 830-amino-acid polypeptide reads, in one-letter code: Leucine--tRNA ligase (830 aa).

The 'HIGH' region signature appears at 48–58; the sequence is PYPSGAIHMGH. A 'KMSKS' region motif is present at residues 596-600; sequence KMSKS. Residue Lys599 participates in ATP binding.

The protein belongs to the class-I aminoacyl-tRNA synthetase family.

The protein localises to the cytoplasm. It catalyses the reaction tRNA(Leu) + L-leucine + ATP = L-leucyl-tRNA(Leu) + AMP + diphosphate. This chain is Leucine--tRNA ligase, found in Helicobacter hepaticus (strain ATCC 51449 / 3B1).